The chain runs to 470 residues: Cysteine--tRNA ligase (470 aa).

Cysteine 30 contributes to the Zn(2+) binding site. A 'HIGH' region motif is present at residues 32 to 42 (PTVYNYIHIGN). Zn(2+)-binding residues include cysteine 211, histidine 236, and glutamate 240. The 'KMSKS' region motif lies at 268–272 (KMSKS). Lysine 271 is a binding site for ATP.

The protein belongs to the class-I aminoacyl-tRNA synthetase family. In terms of assembly, monomer. It depends on Zn(2+) as a cofactor.

The protein resides in the cytoplasm. It carries out the reaction tRNA(Cys) + L-cysteine + ATP = L-cysteinyl-tRNA(Cys) + AMP + diphosphate. This is Cysteine--tRNA ligase from Fervidobacterium nodosum (strain ATCC 35602 / DSM 5306 / Rt17-B1).